The following is a 359-amino-acid chain: tRNA/tmRNA (uracil-C(5))-methyltransferase (359 aa).

5 residues coordinate S-adenosyl-L-methionine: Q183, Y211, N216, E232, and D292. The active-site Nucleophile is the C317. E351 acts as the Proton acceptor in catalysis.

It belongs to the class I-like SAM-binding methyltransferase superfamily. RNA M5U methyltransferase family. TrmA subfamily.

The catalysed reaction is uridine(54) in tRNA + S-adenosyl-L-methionine = 5-methyluridine(54) in tRNA + S-adenosyl-L-homocysteine + H(+). The enzyme catalyses uridine(341) in tmRNA + S-adenosyl-L-methionine = 5-methyluridine(341) in tmRNA + S-adenosyl-L-homocysteine + H(+). Functionally, dual-specificity methyltransferase that catalyzes the formation of 5-methyluridine at position 54 (m5U54) in all tRNAs, and that of position 341 (m5U341) in tmRNA (transfer-mRNA). This is tRNA/tmRNA (uracil-C(5))-methyltransferase from Pseudomonas fluorescens (strain SBW25).